A 144-amino-acid polypeptide reads, in one-letter code: Arsenate reductase ArsI1 (144 aa).

The Nucleophile; cysteine thioarsenate intermediate role is filled by cysteine 14.

The protein belongs to the ArsC family.

The enzyme catalyses [glutaredoxin]-dithiol + arsenate + glutathione + H(+) = glutathionyl-S-S-[glutaredoxin] + arsenite + H2O. Catalyzes the reduction of arsenate [As(V)] to arsenite [As(III)]. Does not constitute the major arsenate reductase in cells: essential only in the absence of ArsC (AC P74313). This Synechocystis sp. (strain ATCC 27184 / PCC 6803 / Kazusa) protein is Arsenate reductase ArsI1.